Reading from the N-terminus, the 360-residue chain is MLVWLAEHLVKYYSGFNVFSYLTFRAIVSLLTALFISLWMGPRMIARLQKLSFGQVVRNDGPESHFSKRGTPTMGGIMILTSIVISVLLWAYPSNPYVWCVLVVLIGYGIIGFVDDYRKVVRKDTKGLIARWKYFWMSVIALGVAFALYLVGKDTPATQLVVPFFKDVMPQLGLFYILLSYFVIVGTGNAVNLTDGLDGLAIMPTVFVAAGFALVAWATGNMNFANYLHIPYLRHAGELVIVCTAIVGAGLGFLWFNTYPAQVFMGDVGSLALGGALGIIAVLLRQEFLLVIMGGVFVVETLSVILQVGSFKLRGQRIFRMAPIHHHYELKGWPEPRVIVRFWIISLMLVLIGLATLKVR.

Topologically, residues 1–25 (MLVWLAEHLVKYYSGFNVFSYLTFR) are periplasmic. A helical transmembrane segment spans residues 26–46 (AIVSLLTALFISLWMGPRMIA). Residues 47–71 (RLQKLSFGQVVRNDGPESHFSKRGT) lie on the Cytoplasmic side of the membrane. A helical membrane pass occupies residues 72-92 (PTMGGIMILTSIVISVLLWAY). Proline 93 is a topological domain (periplasmic). A helical transmembrane segment spans residues 94–114 (SNPYVWCVLVVLIGYGIIGFV). At 115–131 (DDYRKVVRKDTKGLIAR) the chain is on the cytoplasmic side. Residues 132 to 152 (WKYFWMSVIALGVAFALYLVG) form a helical membrane-spanning segment. Residues 153–167 (KDTPATQLVVPFFKD) lie on the Periplasmic side of the membrane. Residues 168–188 (VMPQLGLFYILLSYFVIVGTG) form a helical membrane-spanning segment. Residues 189 to 198 (NAVNLTDGLD) lie on the Cytoplasmic side of the membrane. The chain crosses the membrane as a helical span at residues 199-219 (GLAIMPTVFVAAGFALVAWAT). The Periplasmic segment spans residues 220–235 (GNMNFANYLHIPYLRH). Residues 236–256 (AGELVIVCTAIVGAGLGFLWF) traverse the membrane as a helical segment. The Cytoplasmic portion of the chain corresponds to 257 to 262 (NTYPAQ). Residues 263–283 (VFMGDVGSLALGGALGIIAVL) traverse the membrane as a helical segment. The Periplasmic segment spans residues 284-287 (LRQE). The helical transmembrane segment at 288–308 (FLLVIMGGVFVVETLSVILQV) threads the bilayer. Topologically, residues 309-337 (GSFKLRGQRIFRMAPIHHHYELKGWPEPR) are cytoplasmic. A helical membrane pass occupies residues 338 to 358 (VIVRFWIISLMLVLIGLATLK). At 359-360 (VR) the chain is on the periplasmic side.

Belongs to the glycosyltransferase 4 family. MraY subfamily. Requires Mg(2+) as cofactor.

It is found in the cell inner membrane. It carries out the reaction UDP-N-acetyl-alpha-D-muramoyl-L-alanyl-gamma-D-glutamyl-meso-2,6-diaminopimeloyl-D-alanyl-D-alanine + di-trans,octa-cis-undecaprenyl phosphate = di-trans,octa-cis-undecaprenyl diphospho-N-acetyl-alpha-D-muramoyl-L-alanyl-D-glutamyl-meso-2,6-diaminopimeloyl-D-alanyl-D-alanine + UMP. Its pathway is cell wall biogenesis; peptidoglycan biosynthesis. Functionally, catalyzes the initial step of the lipid cycle reactions in the biosynthesis of the cell wall peptidoglycan: transfers peptidoglycan precursor phospho-MurNAc-pentapeptide from UDP-MurNAc-pentapeptide onto the lipid carrier undecaprenyl phosphate, yielding undecaprenyl-pyrophosphoryl-MurNAc-pentapeptide, known as lipid I. In Salmonella gallinarum (strain 287/91 / NCTC 13346), this protein is Phospho-N-acetylmuramoyl-pentapeptide-transferase.